We begin with the raw amino-acid sequence, 283 residues long: ATP synthase gamma chain (283 aa).

This sequence belongs to the ATPase gamma chain family. In terms of assembly, F-type ATPases have 2 components, CF(1) - the catalytic core - and CF(0) - the membrane proton channel. CF(1) has five subunits: alpha(3), beta(3), gamma(1), delta(1), epsilon(1). CF(0) has three main subunits: a, b and c.

The protein resides in the cell inner membrane. Functionally, produces ATP from ADP in the presence of a proton gradient across the membrane. The gamma chain is believed to be important in regulating ATPase activity and the flow of protons through the CF(0) complex. In Ehrlichia ruminantium (strain Gardel), this protein is ATP synthase gamma chain.